Here is a 523-residue protein sequence, read N- to C-terminus: CRPPSSPSLSWPPGLRSPALPRAVACARGRSAKRDVAAKRLRSRSPRMDATTGDFTALQKAVKQMATKAGTEGLVHGIKNPELRQLLTEIFMKDPEQQEFMQAVREVAVSLQPVFEKRPELLPIFKQIVEPERVITFRVSWLDDAGNLQVNRGFRVQYSSAIGPYKGGLRFHPSVNLSIMKFLAFEQIFKNSLTTLPMGGGKGGSDFDPKGKSDAEVMRFCQSFMTELQRHISYVQDVPAGDIGVGAREIGYLFGQYKRITKNYTGVLTGKGQEYGGSEIRPEATGYGAVLFVENVLKDKGESLKGKRCLVSGAGNVAQYCAELLLEKGAIVLSLSDSQGYVYEPNGFTREQLQAVQDMKKKNNSARISEYKSDTAVYVGDRRKPWELDCQVDIAFPCATQNEIDEHDAELLIKHGCQYVVEGANMPSTNEAIHKYNKAGIIYCPGKAANAGGVAVSGLEMTQNRMSLNWTREEVRDKLERIMKDIYDSAMGPSREYNVDLAAGANIAGFTKVADAVKAQGAV.

The segment at cysteine 26–alanine 50 is disordered. Lysine 202 is a catalytic residue.

The protein belongs to the Glu/Leu/Phe/Val dehydrogenases family. In terms of assembly, homo- and heterohexamer of alpha and beta subunits. Both subunits are encoded by the same gene. The N-termini of the alpha and the beta chains are blocked.

Its subcellular location is the plastid. The protein localises to the chloroplast. It catalyses the reaction L-glutamate + NADP(+) + H2O = 2-oxoglutarate + NH4(+) + NADPH + H(+). The protein is NADP-specific glutamate dehydrogenase of Chlorella sorokiniana (Freshwater green alga).